The primary structure comprises 156 residues: H/ACA ribonucleoprotein complex subunit 2-like protein (156 aa).

This sequence belongs to the eukaryotic ribosomal protein eL8 family. Component of the small nucleolar ribonucleoprotein particle containing H/ACA-type snoRNAs (H/ACA snoRNPs).

The protein localises to the nucleus. It is found in the nucleolus. Its function is as follows. Required for ribosome biogenesis. Part of a complex which catalyzes pseudouridylation of rRNA. This involves the isomerization of uridine such that the ribose is subsequently attached to C5, instead of the normal N1. Pseudouridine ('psi') residues may serve to stabilize the conformation of rRNAs. In Arabidopsis thaliana (Mouse-ear cress), this protein is H/ACA ribonucleoprotein complex subunit 2-like protein.